Reading from the N-terminus, the 638-residue chain is Meiosis initiator protein (638 aa).

5 disordered regions span residues 1–21 (MFGS…SLGP), 60–79 (NQRN…KNHT), 138–249 (LAGL…KGGQ), 404–433 (PSAY…SLHR), and 447–537 (GNSK…PCPP). The segment covering 7 to 20 (YLGSSEQPRANSLG) has biased composition (polar residues). The tract at residues 62–75 (RNQNKLLSPNKKQR) is basic motif; degenerate. Residues 62–116 (RNQNKLLSPNKKQRKNHTSKLQELALLLPIALKTGTKKLTKKEILVHVLQYIQYL) form the bHLH domain. Residues 76 to 116 (KNHTSKLQELALLLPIALKTGTKKLTKKEILVHVLQYIQYL) form a helix-loop-helix motif region. A compositionally biased stretch (low complexity) spans 157 to 167 (TPSSSPSSQKS). Residues 182–191 (TQASESQTRT) show a composition bias toward polar residues. The segment covering 412 to 430 (PQEKDTASKAPKDPPESHS) has biased composition (basic and acidic residues). Residues 453–465 (SSSSSSSSSSSSS) are compositionally biased toward low complexity. Over residues 528–537 (KEKKKGPCPP) the composition is skewed to basic residues. The HMG box DNA-binding region spans 540-608 (KKKCVNGFIM…QHNRIVKQDG (69 aa)).

Interacts with STRA8.

The protein localises to the nucleus. Functionally, gatekeeper of meiotic initiation in both male and female germ cells. In complex with STRA8, directly activates the transcription of a subset of critical meiotic genes playing a central role in cell-cycle switching from mitosis to meiosis. Temporal expression of MEIOSIN is required for meiotic entry decision. The protein is Meiosis initiator protein of Homo sapiens (Human).